Here is a 411-residue protein sequence, read N- to C-terminus: Protein CNPPD1 (411 aa).

A helical transmembrane segment spans residues 231–253 (LSCLLAMAYVSSVALAVASMAVI).

It belongs to the CNPPD1 family.

It is found in the membrane. This is Protein CNPPD1 (CNPPD1) from Bos taurus (Bovine).